The chain runs to 386 residues: Succinate--CoA ligase [ADP-forming] subunit beta (386 aa).

The region spanning 9-244 is the ATP-grasp domain; the sequence is KAVLRSYGVS…LDEEDSKEIE (236 aa). ATP contacts are provided by residues lysine 46, 53-55, glutamate 99, cysteine 102, and glutamate 107; that span reads GRG. Asparagine 199 and aspartate 213 together coordinate Mg(2+). Substrate contacts are provided by residues asparagine 264 and 321–323; that span reads GIM.

It belongs to the succinate/malate CoA ligase beta subunit family. In terms of assembly, heterotetramer of two alpha and two beta subunits. It depends on Mg(2+) as a cofactor.

The catalysed reaction is succinate + ATP + CoA = succinyl-CoA + ADP + phosphate. The enzyme catalyses GTP + succinate + CoA = succinyl-CoA + GDP + phosphate. It functions in the pathway carbohydrate metabolism; tricarboxylic acid cycle; succinate from succinyl-CoA (ligase route): step 1/1. Succinyl-CoA synthetase functions in the citric acid cycle (TCA), coupling the hydrolysis of succinyl-CoA to the synthesis of either ATP or GTP and thus represents the only step of substrate-level phosphorylation in the TCA. The beta subunit provides nucleotide specificity of the enzyme and binds the substrate succinate, while the binding sites for coenzyme A and phosphate are found in the alpha subunit. The polypeptide is Succinate--CoA ligase [ADP-forming] subunit beta (Bacillus cereus (strain ATCC 14579 / DSM 31 / CCUG 7414 / JCM 2152 / NBRC 15305 / NCIMB 9373 / NCTC 2599 / NRRL B-3711)).